The sequence spans 105 residues: Small ribosomal subunit protein uS10 (105 aa).

This sequence belongs to the universal ribosomal protein uS10 family. Part of the 30S ribosomal subunit.

Its function is as follows. Involved in the binding of tRNA to the ribosomes. The chain is Small ribosomal subunit protein uS10 from Synechococcus sp. (strain JA-3-3Ab) (Cyanobacteria bacterium Yellowstone A-Prime).